An 85-amino-acid chain; its full sequence is Protein MANBAL (85 aa).

A helical transmembrane segment spans residues 24 to 44 (YGLFLGAIFQLICVLAIIVPI). Over residues 49 to 64 (EAEAEQAEPRSAEGPK) the composition is skewed to basic and acidic residues. The disordered stretch occupies residues 49 to 85 (EAEAEQAEPRSAEGPKKPKAAIASTNKRPKKETKKKR). Positions 75–85 (KRPKKETKKKR) are enriched in basic residues.

It belongs to the UPF0239 family.

The protein resides in the membrane. This Mus musculus (Mouse) protein is Protein MANBAL (Manbal).